The following is a 95-amino-acid chain: Fluoride-specific ion channel FluC 1 (95 aa).

The next 3 membrane-spanning stretches (helical) occupy residues 23–43, 49–69, and 70–90; these read LIDAPLALLGINLLGSFLMGW, LWGTGFLGGFTSFSAFALLMF, and DGAYLYAAVTVIGCVAAWLLG. Residues glycine 56 and threonine 59 each contribute to the Na(+) site.

This sequence belongs to the fluoride channel Fluc/FEX (TC 1.A.43) family.

It localises to the cell membrane. The catalysed reaction is fluoride(in) = fluoride(out). Its activity is regulated as follows. Na(+) is not transported, but it plays an essential structural role and its presence is essential for fluoride channel function. Functionally, fluoride-specific ion channel. Important for reducing fluoride concentration in the cell, thus reducing its toxicity. The chain is Fluoride-specific ion channel FluC 1 from Corynebacterium diphtheriae (strain ATCC 700971 / NCTC 13129 / Biotype gravis).